Consider the following 638-residue polypeptide: Sodium- and chloride-dependent glycine transporter 1 (638 aa).

The disordered stretch occupies residues 1–29; it reads MAAAQGPVAPSSLEQNGAVPSEATKKDQN. The Cytoplasmic segment spans residues 1–40; the sequence is MAAAQGPVAPSSLEQNGAVPSEATKKDQNLKRGNWGNQIE. The next 3 helical transmembrane spans lie at 41–61, 69–88, and 112–132; these read FVLT…FPYL, AFMF…LFFM, and GVGY…NVVI. Topologically, residues 133 to 219 are extracellular; sequence CIAFYYFFSS…DDIGNFGEVR (87 aa). Residues asparagine 169, asparagine 172, asparagine 182, and asparagine 188 are each glycosylated (N-linked (GlcNAc...) asparagine). Helical transmembrane passes span 220 to 238, 247 to 264, 300 to 317, 329 to 350, 383 to 402, 431 to 449, 465 to 485, 506 to 525, and 544 to 562; these read LPLL…LCLI, VVYF…ILFI, IFYS…MASY, VIIS…FSIL, LPIS…LLGL, YVTL…PLTS, SFSL…IYGH, ICWR…FSVI, and IGFL…YALF. The Cytoplasmic portion of the chain corresponds to 563–638; the sequence is QFCRTDGDTL…GSSRFQDSRI (76 aa). The segment at 597 to 638 is disordered; that stretch reads RYAPTTTPSPEDGLEVQPLHPDKAQIPMVGSNGSSRFQDSRI. Threonine 603 is subject to Phosphothreonine. A phosphoserine mark is found at serine 605 and serine 630. An essential for interaction with EXOC1 region spans residues 627–638; sequence SNGSSRFQDSRI. Residues 627–638 are compositionally biased toward polar residues; it reads SNGSSRFQDSRI.

The protein belongs to the sodium:neurotransmitter symporter (SNF) (TC 2.A.22) family. SLC6A9 subfamily. As to quaternary structure, interacts with EXOC1; interaction increases the transporter capacity of SLC6A9 probably by promoting its insertion into the cell membrane. Interacts with EXOC3 and EXOC4.

The protein localises to the cell membrane. The catalysed reaction is glycine(out) + chloride(out) + 2 Na(+)(out) = glycine(in) + chloride(in) + 2 Na(+)(in). Its function is as follows. Sodium- and chloride-dependent glycine transporter which is essential for regulating glycine concentrations at inhibitory glycinergic synapses. The chain is Sodium- and chloride-dependent glycine transporter 1 (SLC6A9) from Bos taurus (Bovine).